Consider the following 207-residue polypeptide: Pyridoxal 5'-phosphate synthase subunit PdxT (207 aa).

53–55 (GES) contacts L-glutamine. Cysteine 85 serves as the catalytic Nucleophile. L-glutamine contacts are provided by residues arginine 114 and 143–144 (IR). Residues histidine 184 and glutamate 186 each act as charge relay system in the active site.

This sequence belongs to the glutaminase PdxT/SNO family. In terms of assembly, in the presence of PdxS, forms a dodecamer of heterodimers. Only shows activity in the heterodimer.

It carries out the reaction aldehydo-D-ribose 5-phosphate + D-glyceraldehyde 3-phosphate + L-glutamine = pyridoxal 5'-phosphate + L-glutamate + phosphate + 3 H2O + H(+). The catalysed reaction is L-glutamine + H2O = L-glutamate + NH4(+). Its pathway is cofactor biosynthesis; pyridoxal 5'-phosphate biosynthesis. In terms of biological role, catalyzes the hydrolysis of glutamine to glutamate and ammonia as part of the biosynthesis of pyridoxal 5'-phosphate. The resulting ammonia molecule is channeled to the active site of PdxS. This chain is Pyridoxal 5'-phosphate synthase subunit PdxT, found in Acidothermus cellulolyticus (strain ATCC 43068 / DSM 8971 / 11B).